The sequence spans 124 residues: Large ribosomal subunit protein bL12 (124 aa).

The protein belongs to the bacterial ribosomal protein bL12 family. In terms of assembly, homodimer. Part of the ribosomal stalk of the 50S ribosomal subunit. Forms a multimeric L10(L12)X complex, where L10 forms an elongated spine to which 2 to 4 L12 dimers bind in a sequential fashion. Binds GTP-bound translation factors.

Its function is as follows. Forms part of the ribosomal stalk which helps the ribosome interact with GTP-bound translation factors. Is thus essential for accurate translation. The chain is Large ribosomal subunit protein bL12 from Burkholderia ambifaria (strain MC40-6).